We begin with the raw amino-acid sequence, 231 residues long: Aldehyde decarbonylase (231 aa).

Glu32, Glu60, His63, Glu115, and His147 together coordinate Fe cation.

This sequence belongs to the aldehyde decarbonylase family. Binds 2 metal cations per subunit. The catalytic dinuclear metal-binding site could be either a di-iron or a manganese-iron cofactor. serves as cofactor.

It carries out the reaction a long-chain fatty aldehyde + 2 NADPH + O2 + H(+) = a long-chain alkane + formate + 2 NADP(+) + H2O. Functionally, catalyzes the decarbonylation of fatty aldehydes to alkanes. Requires the presence of ferredoxin, ferredoxin reductase and NADPH for in vitro decarbonylase activity. Involved in the biosynthesis of alkanes, mainly heptadecane and pentadecane. The chain is Aldehyde decarbonylase from Synechocystis sp. (strain ATCC 27184 / PCC 6803 / Kazusa).